A 223-amino-acid chain; its full sequence is Imidazoleglycerol-phosphate dehydratase (223 aa).

The protein belongs to the imidazoleglycerol-phosphate dehydratase family.

It catalyses the reaction D-erythro-1-(imidazol-4-yl)glycerol 3-phosphate = 3-(imidazol-4-yl)-2-oxopropyl phosphate + H2O. The protein operates within amino-acid biosynthesis; L-histidine biosynthesis; L-histidine from 5-phospho-alpha-D-ribose 1-diphosphate: step 6/9. This chain is Imidazoleglycerol-phosphate dehydratase (HIS3), found in Candida albicans (Yeast).